A 75-amino-acid polypeptide reads, in one-letter code: Veswaprin-c (75 aa).

Positions 1-24 (MSSGGLLLLLGLLTLWAELTPVSS) are cleaved as a signal peptide. Positions 27 to 72 (RPKKPGLCPPRPQKPPCVRECKNDWRCPGERKCCRYGCIYECRDPI) constitute a WAP domain. 4 disulfides stabilise this stretch: Cys34/Cys60, Cys43/Cys64, Cys47/Cys59, and Cys53/Cys68.

Belongs to the venom waprin family. Expressed by the venom gland.

It is found in the secreted. Damages membranes of susceptible bacteria. Has no hemolytic activity. Not toxic to mice. Does not inhibit the proteinases elastase and cathepsin G. In Demansia vestigiata (Lesser black whip snake), this protein is Veswaprin-c.